Here is a 587-residue protein sequence, read N- to C-terminus: NADH-quinone oxidoreductase subunit C/D (587 aa).

Residues 1–178 form an NADH dehydrogenase I subunit C region; the sequence is MAAPTTEHAE…EPFSLPDDVQ (178 aa). The interval 202 to 587 is NADH dehydrogenase I subunit D; the sequence is DFLFLNLGPN…IDFVMADVDR (386 aa).

This sequence in the N-terminal section; belongs to the complex I 30 kDa subunit family. The protein in the C-terminal section; belongs to the complex I 49 kDa subunit family. NDH-1 is composed of 13 different subunits. Subunits NuoB, CD, E, F, and G constitute the peripheral sector of the complex.

It is found in the cell inner membrane. The catalysed reaction is a quinone + NADH + 5 H(+)(in) = a quinol + NAD(+) + 4 H(+)(out). NDH-1 shuttles electrons from NADH, via FMN and iron-sulfur (Fe-S) centers, to quinones in the respiratory chain. The immediate electron acceptor for the enzyme in this species is believed to be ubiquinone. Couples the redox reaction to proton translocation (for every two electrons transferred, four hydrogen ions are translocated across the cytoplasmic membrane), and thus conserves the redox energy in a proton gradient. This Methylococcus capsulatus (strain ATCC 33009 / NCIMB 11132 / Bath) protein is NADH-quinone oxidoreductase subunit C/D.